A 217-amino-acid polypeptide reads, in one-letter code: MSEHNEFDVAELRREYIRGGLRRKDLTEEPIELFERWLNQACNAKLSDPTAMSIATVDENGQPYQRIVLLKHFDSNSLIFYTNLGSRKAKHLAHNNKISLHFPWYPLERQVSFLGKAERLSPVEVVKYFHSRPRDSQIAAWASQQSSRISARGVLEGKFLELKQKFLNGEVPLPSFWGGFKVTFDSVEFWQGGANRLHDRFIYQRQGDSWHVDRLAP.

Residues 13–16 (RREY) and lysine 71 contribute to the substrate site. FMN contacts are provided by residues 66–71 (RIVLLK), 81–82 (YT), arginine 87, lysine 88, and glutamine 110. Substrate contacts are provided by tyrosine 128, arginine 132, and serine 136. Residues 145–146 (QS) and tryptophan 190 contribute to the FMN site. Substrate is bound at residue 196-198 (RLH). Arginine 200 contributes to the FMN binding site.

The protein belongs to the pyridoxamine 5'-phosphate oxidase family. As to quaternary structure, homodimer. The cofactor is FMN.

The enzyme catalyses pyridoxamine 5'-phosphate + O2 + H2O = pyridoxal 5'-phosphate + H2O2 + NH4(+). The catalysed reaction is pyridoxine 5'-phosphate + O2 = pyridoxal 5'-phosphate + H2O2. Its pathway is cofactor metabolism; pyridoxal 5'-phosphate salvage; pyridoxal 5'-phosphate from pyridoxamine 5'-phosphate: step 1/1. It functions in the pathway cofactor metabolism; pyridoxal 5'-phosphate salvage; pyridoxal 5'-phosphate from pyridoxine 5'-phosphate: step 1/1. Catalyzes the oxidation of either pyridoxine 5'-phosphate (PNP) or pyridoxamine 5'-phosphate (PMP) into pyridoxal 5'-phosphate (PLP). The polypeptide is Pyridoxine/pyridoxamine 5'-phosphate oxidase (Photorhabdus laumondii subsp. laumondii (strain DSM 15139 / CIP 105565 / TT01) (Photorhabdus luminescens subsp. laumondii)).